The sequence spans 118 residues: Protein TusC (118 aa).

The protein belongs to the DsrF/TusC family. Heterohexamer, formed by a dimer of trimers. The hexameric TusBCD complex contains 2 copies each of TusB, TusC and TusD. The TusBCD complex interacts with TusE.

It is found in the cytoplasm. Its function is as follows. Part of a sulfur-relay system required for 2-thiolation of 5-methylaminomethyl-2-thiouridine (mnm(5)s(2)U) at tRNA wobble positions. The sequence is that of Protein TusC from Salmonella gallinarum (strain 287/91 / NCTC 13346).